Reading from the N-terminus, the 213-residue chain is ATP synthase peripheral stalk subunit OSCP, mitochondrial (213 aa).

A mitochondrion-targeting transit peptide spans 1 to 23 (MAALAVSGLSQQVRCFSTSVVRP). Positions 5–23 (AVSGLSQQVRCFSTSVVRP) match the SIFI-degron motif. 4 positions are modified to N6-acetyllysine: Lys54, Lys60, Lys70, and Lys73. Lys90 carries the N6-succinyllysine modification. Residues Lys100, Lys158, and Lys162 each carry the N6-acetyllysine; alternate modification. 3 positions are modified to N6-succinyllysine; alternate: Lys100, Lys158, and Lys162. Lys172, Lys176, and Lys192 each carry N6-acetyllysine. Lys199 is subject to N6-succinyllysine.

It belongs to the ATPase delta chain family. In terms of assembly, component of the ATP synthase complex composed at least of ATP5F1A/subunit alpha, ATP5F1B/subunit beta, ATP5MC1/subunit c (homooctomer), MT-ATP6/subunit a, MT-ATP8/subunit 8, ATP5ME/subunit e, ATP5MF/subunit f, ATP5MG/subunit g, ATP5MK/subunit k, ATP5MJ/subunit j, ATP5F1C/subunit gamma, ATP5F1D/subunit delta, ATP5F1E/subunit epsilon, ATP5PF/subunit F6, ATP5PB/subunit b, ATP5PD/subunit d, ATP5PO/subunit OSCP. ATP synthase complex consists of a soluble F(1) head domain (subunits alpha(3) and beta(3)) - the catalytic core - and a membrane F(0) domain - the membrane proton channel (subunits c, a, 8, e, f, g, k and j). These two domains are linked by a central stalk (subunits gamma, delta, and epsilon) rotating inside the F1 region and a stationary peripheral stalk (subunits F6, b, d, and OSCP). Acetylation at Lys-162 decreases ATP production. Deacetylated by SIRT3. In terms of processing, in response to mitochondrial stress, the precursor protein is ubiquitinated by the SIFI complex in the cytoplasm before mitochondrial import, leading to its degradation. Within the SIFI complex, UBR4 initiates ubiquitin chain that are further elongated or branched by KCMF1.

It localises to the mitochondrion. Its subcellular location is the mitochondrion inner membrane. Functionally, subunit OSCP, of the mitochondrial membrane ATP synthase complex (F(1)F(0) ATP synthase or Complex V) that produces ATP from ADP in the presence of a proton gradient across the membrane which is generated by electron transport complexes of the respiratory chain. ATP synthase complex consist of a soluble F(1) head domain - the catalytic core - and a membrane F(1) domain - the membrane proton channel. These two domains are linked by a central stalk rotating inside the F(1) region and a stationary peripheral stalk. During catalysis, ATP synthesis in the catalytic domain of F(1) is coupled via a rotary mechanism of the central stalk subunits to proton translocation. In vivo, can only synthesize ATP although its ATP hydrolase activity can be activated artificially in vitro. Part of the complex F(0) domain. Part of the complex F(0) domain and the peripheric stalk, which acts as a stator to hold the catalytic alpha(3)beta(3) subcomplex and subunit a/ATP6 static relative to the rotary elements. The sequence is that of ATP synthase peripheral stalk subunit OSCP, mitochondrial from Bos taurus (Bovine).